The chain runs to 183 residues: Ribosome rescue factor SmrB (183 aa).

In terms of domain architecture, Smr spans 98 to 173; it reads LDLHGLTQLQ…GDAALLVLIE (76 aa).

It belongs to the SmrB family. As to quaternary structure, associates with collided ribosomes, but not with correctly translating polysomes.

Acts as a ribosome collision sensor. Detects stalled/collided disomes (pairs of ribosomes where the leading ribosome is stalled and a second ribosome has collided with it) and endonucleolytically cleaves mRNA at the 5' boundary of the stalled ribosome. Stalled/collided disomes form a new interface (primarily via the 30S subunits) that binds SmrB. Cleaved mRNA becomes available for tmRNA ligation, leading to ribosomal subunit dissociation and rescue of stalled ribosomes. The sequence is that of Ribosome rescue factor SmrB from Salmonella paratyphi A (strain ATCC 9150 / SARB42).